The following is a 171-amino-acid chain: Adenine phosphoribosyltransferase (171 aa).

The protein belongs to the purine/pyrimidine phosphoribosyltransferase family. In terms of assembly, homodimer.

The protein resides in the cytoplasm. It carries out the reaction AMP + diphosphate = 5-phospho-alpha-D-ribose 1-diphosphate + adenine. Its pathway is purine metabolism; AMP biosynthesis via salvage pathway; AMP from adenine: step 1/1. Its function is as follows. Catalyzes a salvage reaction resulting in the formation of AMP, that is energically less costly than de novo synthesis. This chain is Adenine phosphoribosyltransferase, found in Mycoplasmopsis fermentans (strain ATCC 19989 / NBRC 14854 / NCTC 10117 / PG18) (Mycoplasma fermentans).